The primary structure comprises 485 residues: Cysteine--tRNA ligase (485 aa).

Cysteine 29 serves as a coordination point for Zn(2+). The 'HIGH' region motif lies at 31 to 41 (VTVYDHCHIGH). Cysteine 209, histidine 234, and glutamate 238 together coordinate Zn(2+). Residues 266 to 270 (KMSKS) carry the 'KMSKS' region motif. ATP is bound at residue lysine 269.

Belongs to the class-I aminoacyl-tRNA synthetase family. In terms of assembly, monomer. Requires Zn(2+) as cofactor.

Its subcellular location is the cytoplasm. The enzyme catalyses tRNA(Cys) + L-cysteine + ATP = L-cysteinyl-tRNA(Cys) + AMP + diphosphate. The protein is Cysteine--tRNA ligase of Geobacter metallireducens (strain ATCC 53774 / DSM 7210 / GS-15).